Reading from the N-terminus, the 345-residue chain is Phosphoribosylformylglycinamidine cyclo-ligase (345 aa).

The protein belongs to the AIR synthase family.

It localises to the cytoplasm. It catalyses the reaction 2-formamido-N(1)-(5-O-phospho-beta-D-ribosyl)acetamidine + ATP = 5-amino-1-(5-phospho-beta-D-ribosyl)imidazole + ADP + phosphate + H(+). It participates in purine metabolism; IMP biosynthesis via de novo pathway; 5-amino-1-(5-phospho-D-ribosyl)imidazole from N(2)-formyl-N(1)-(5-phospho-D-ribosyl)glycinamide: step 2/2. In Escherichia coli O127:H6 (strain E2348/69 / EPEC), this protein is Phosphoribosylformylglycinamidine cyclo-ligase.